An 85-amino-acid polypeptide reads, in one-letter code: Large ribosomal subunit protein bL27 (85 aa).

The disordered stretch occupies residues 1-22; that stretch reads MAHKKGGGSSRNGRDSNAQRRG.

It belongs to the bacterial ribosomal protein bL27 family.

In Sorangium cellulosum (strain So ce56) (Polyangium cellulosum (strain So ce56)), this protein is Large ribosomal subunit protein bL27.